The following is a 439-amino-acid chain: Glycosyl hydrolase DigH (439 aa).

The N-terminal stretch at 1–27 (MDICSRNEKLAIRRPAILVALALLLCS) is a signal peptide. Cysteine 28 carries N-palmitoyl cysteine lipidation. Residue cysteine 28 is the site of S-diacylglycerol cysteine attachment. The segment at 34–54 (ESMVTPPAGSKPPATTQQSSQ) is disordered.

It belongs to the glycosyl hydrolase-like 10 (GHL10) family.

It is found in the cell outer membrane. In terms of biological role, divisome-localized glycosyl hydrolase that cleaves peptide-free (denuded) peptidoglycans. This is Glycosyl hydrolase DigH from Escherichia coli O6:H1 (strain CFT073 / ATCC 700928 / UPEC).